The primary structure comprises 685 residues: Multisite-specific tRNA:(cytosine-C(5))-methyltransferase trm4b (685 aa).

S-adenosyl-L-methionine contacts are provided by residues 167-173 (CAAPGSK), aspartate 208, aspartate 235, and aspartate 270. Catalysis depends on cysteine 323, which acts as the Nucleophile.

The protein belongs to the class I-like SAM-binding methyltransferase superfamily. RsmB/NOP family. TRM4 subfamily.

It is found in the nucleus. The catalysed reaction is cytidine(49) in tRNA precursor + S-adenosyl-L-methionine = 5-methylcytidine(49) in tRNA precursor + S-adenosyl-L-homocysteine + H(+). The enzyme catalyses cytidine(50) in tRNA + S-adenosyl-L-methionine = 5-methylcytidine(50) in tRNA + S-adenosyl-L-homocysteine + H(+). It carries out the reaction cytidine(60) in tRNA(Asp) + S-adenosyl-L-methionine = 5-methylcytidine(60) in tRNA(Asp) + S-adenosyl-L-homocysteine + H(+). It catalyses the reaction cytidine(61) in tRNA(Asp) + S-adenosyl-L-methionine = 5-methylcytidine(61) in tRNA(Asp) + S-adenosyl-L-homocysteine + H(+). The catalysed reaction is cytidine(62) in tRNA(Asp) + S-adenosyl-L-methionine = 5-methylcytidine(62) in tRNA(Asp) + S-adenosyl-L-homocysteine + H(+). Its function is as follows. tRNA cytosine C(5)-methyltransferase that methylates cytosine to 5-methylcytosine (m5C) in tRNAs at position 49 and 50. Trm4a and trm4b methylate different sets of tRNAs. Also methylates cytosine to m5C at positions (60, 61 and 62) in tRNA(Asp). The polypeptide is Multisite-specific tRNA:(cytosine-C(5))-methyltransferase trm4b (Schizosaccharomyces pombe (strain 972 / ATCC 24843) (Fission yeast)).